The following is a 634-amino-acid chain: 1-deoxy-D-xylulose-5-phosphate synthase (634 aa).

Thiamine diphosphate is bound by residues His-74 and 115–117 (AHS). Asp-146 contributes to the Mg(2+) binding site. Residues 147 to 148 (GA), Asn-176, Tyr-283, and Glu-365 each bind thiamine diphosphate. Asn-176 contacts Mg(2+).

Belongs to the transketolase family. DXPS subfamily. Homodimer. The cofactor is Mg(2+). Thiamine diphosphate is required as a cofactor.

The catalysed reaction is D-glyceraldehyde 3-phosphate + pyruvate + H(+) = 1-deoxy-D-xylulose 5-phosphate + CO2. Its pathway is metabolic intermediate biosynthesis; 1-deoxy-D-xylulose 5-phosphate biosynthesis; 1-deoxy-D-xylulose 5-phosphate from D-glyceraldehyde 3-phosphate and pyruvate: step 1/1. Functionally, catalyzes the acyloin condensation reaction between C atoms 2 and 3 of pyruvate and glyceraldehyde 3-phosphate to yield 1-deoxy-D-xylulose-5-phosphate (DXP). This Burkholderia orbicola (strain MC0-3) protein is 1-deoxy-D-xylulose-5-phosphate synthase.